Reading from the N-terminus, the 182-residue chain is UPF0397 protein VV2_1534 (182 aa).

Transmembrane regions (helical) follow at residues 8–28, 41–61, 72–92, 110–130, and 146–166; these read VVVIAIGAALYGIGGLPMFGI, AVLALFSVLFGPLVGFLVGFI, WGVWLTWVLGSGIVGLIIGLF, FSLFVVLALLGNVFGYGCSAF, and QLTIIASGNTVLIAIVGYFIL.

The protein belongs to the UPF0397 family.

Its subcellular location is the cell membrane. The chain is UPF0397 protein VV2_1534 from Vibrio vulnificus (strain CMCP6).